A 225-amino-acid polypeptide reads, in one-letter code: Uracil-DNA glycosylase (225 aa).

The active-site Proton acceptor is the D65.

It belongs to the uracil-DNA glycosylase (UDG) superfamily. UNG family.

The protein resides in the cytoplasm. It carries out the reaction Hydrolyzes single-stranded DNA or mismatched double-stranded DNA and polynucleotides, releasing free uracil.. Its function is as follows. Excises uracil residues from the DNA which can arise as a result of misincorporation of dUMP residues by DNA polymerase or due to deamination of cytosine. This Bacillus cereus (strain B4264) protein is Uracil-DNA glycosylase.